The sequence spans 149 residues: Probable microsomal glutathione S-transferase (149 aa).

Helical transmembrane passes span 7–27 (SIFPDFIVFPSAISTIAIGLW) and 123–143 (LSHISFFALLGGSAFGIGSSL).

It belongs to the MAPEG family.

Its subcellular location is the membrane. The enzyme catalyses RX + glutathione = an S-substituted glutathione + a halide anion + H(+). Its function is as follows. May perform the conjugation of reduced glutathione to electrophiles. The polypeptide is Probable microsomal glutathione S-transferase (mgst) (Dictyostelium discoideum (Social amoeba)).